Here is a 170-residue protein sequence, read N- to C-terminus: MSNYSQLLQNATWQPSTDMQLPLSISSWLELSTSLTTQLKQAFGEVNVCVLAESWITTLNENERQFFPKQACPCWCREVILKSQDIPLIFARTLIPASLLTQHSELQQLGNRALGEWLFMQSDRIRQKLELTHDKNTALYARRALMSIGAENMMVAELFLTPQIFTRVVK.

Substrate-binding residues include R77, L114, and E157.

It belongs to the UbiC family.

Its subcellular location is the cytoplasm. It carries out the reaction chorismate = 4-hydroxybenzoate + pyruvate. It participates in cofactor biosynthesis; ubiquinone biosynthesis. Its function is as follows. Removes the pyruvyl group from chorismate, with concomitant aromatization of the ring, to provide 4-hydroxybenzoate (4HB) for the ubiquinone pathway. In Pasteurella multocida (strain Pm70), this protein is Probable chorismate pyruvate-lyase.